The following is a 315-amino-acid chain: Homoserine kinase (315 aa).

97-107 lines the ATP pocket; the sequence is PPARGLGSSAT.

It belongs to the GHMP kinase family. Homoserine kinase subfamily.

The protein resides in the cytoplasm. The catalysed reaction is L-homoserine + ATP = O-phospho-L-homoserine + ADP + H(+). The protein operates within amino-acid biosynthesis; L-threonine biosynthesis; L-threonine from L-aspartate: step 4/5. Functionally, catalyzes the ATP-dependent phosphorylation of L-homoserine to L-homoserine phosphate. The sequence is that of Homoserine kinase from Prochlorococcus marinus (strain NATL1A).